A 128-amino-acid chain; its full sequence is Azurin (128 aa).

Residues 1–128 (AECSVDIQGN…ALMKGTLTLK (128 aa)) enclose the Plastocyanin-like domain. An intrachain disulfide couples C3 to C26. Cu cation-binding residues include H46, C112, H117, and M121.

The protein resides in the periplasm. Its function is as follows. Transfers electrons from cytochrome c551 to cytochrome oxidase. The chain is Azurin from Pseudomonas aeruginosa.